Reading from the N-terminus, the 215-residue chain is Protein-L-isoaspartate O-methyltransferase (215 aa).

Serine 62 is a catalytic residue.

Belongs to the methyltransferase superfamily. L-isoaspartyl/D-aspartyl protein methyltransferase family.

The protein resides in the cytoplasm. It carries out the reaction [protein]-L-isoaspartate + S-adenosyl-L-methionine = [protein]-L-isoaspartate alpha-methyl ester + S-adenosyl-L-homocysteine. In terms of biological role, catalyzes the methyl esterification of L-isoaspartyl residues in peptides and proteins that result from spontaneous decomposition of normal L-aspartyl and L-asparaginyl residues. It plays a role in the repair and/or degradation of damaged proteins. The sequence is that of Protein-L-isoaspartate O-methyltransferase from Bradyrhizobium sp. (strain ORS 278).